The following is a 338-amino-acid chain: MIQKNWQELIKPSKLDVTPGDDSKRFATIIAEPLERGFGLTLGNALRRILLSSLQGAAITSVHIDGVLHEFSSIPGVREDVTDIILNIKDIAIKMQGEGPKRMVLKKQGPGKVLAGDIGAVGDVQILNPNLVICTLDEGAEIRMEFTVNTGKGYVAADRNRAEDAPIGLIPVDSLYSPVKKVSYKVENTREGQILDYDKLTLQIETNGSLTPEDAVAFSARILQDQLNVFVNFEEPRREEATPSIPELAFNPALLKKVDELELSVRSANCLKNDNIVYIGDLIQKTEAEMLRTPNFGRKSLNEIKEVLAQMGLHLGMEVTGWPPDNIDELAKRFEEHY.

Positions 1–234 (MIQKNWQELI…DQLNVFVNFE (234 aa)) are alpha N-terminal domain (alpha-NTD). An alpha C-terminal domain (alpha-CTD) region spans residues 250–338 (FNPALLKKVD…ELAKRFEEHY (89 aa)).

This sequence belongs to the RNA polymerase alpha chain family. Homodimer. The RNAP catalytic core consists of 2 alpha, 1 beta, 1 beta' and 1 omega subunit. When a sigma factor is associated with the core the holoenzyme is formed, which can initiate transcription.

It catalyses the reaction RNA(n) + a ribonucleoside 5'-triphosphate = RNA(n+1) + diphosphate. Functionally, DNA-dependent RNA polymerase catalyzes the transcription of DNA into RNA using the four ribonucleoside triphosphates as substrates. This is DNA-directed RNA polymerase subunit alpha from Beijerinckia indica subsp. indica (strain ATCC 9039 / DSM 1715 / NCIMB 8712).